Reading from the N-terminus, the 308-residue chain is Beta-carotene hydroxylase 2, chloroplastic (308 aa).

Residues 1–59 (MAAARISFSSTSRTSYYRHSPFLGPKPTPTTPSVYPITPFSPNLGSILRCRRRPSFTVC) constitute a chloroplast transit peptide. 2 helical membrane-spanning segments follow: residues 105-125 (YLVA…MAVY) and 139-159 (FSEM…MEFW). Positions 152–279 (AAVGMEFWAR…KFNGVPYGLF (128 aa)) constitute a Fatty acid hydroxylase domain. The Histidine box-1 signature appears at 164–169 (HKALWH). The short motif at 176-180 (HESHH) is the Histidine box-2 element. Helical transmembrane passes span 191–211 (DVFA…GFFH) and 215–235 (IPGL…AYMF). Positions 237 to 242 (HDGLVH) match the Histidine box-3 motif. Residues 263–267 (HSLHH) carry the Histidine box-4 motif.

The protein belongs to the sterol desaturase family.

The protein resides in the plastid. It localises to the chloroplast membrane. It catalyses the reaction all-trans-beta-carotene + 4 reduced [2Fe-2S]-[ferredoxin] + 2 O2 + 4 H(+) = all-trans-zeaxanthin + 4 oxidized [2Fe-2S]-[ferredoxin] + 2 H2O. The catalysed reaction is all-trans-beta-carotene + 2 reduced [2Fe-2S]-[ferredoxin] + O2 + 2 H(+) = beta-cryptoxanthin + 2 oxidized [2Fe-2S]-[ferredoxin] + H2O. It carries out the reaction beta-cryptoxanthin + 2 reduced [2Fe-2S]-[ferredoxin] + O2 + 2 H(+) = all-trans-zeaxanthin + 2 oxidized [2Fe-2S]-[ferredoxin] + H2O. With respect to regulation, inhibited by o-phenanthroline and 8-hydroxyquinoline. Nonheme diiron monooxygenase involved in the biosynthesis of xanthophylls. Specific for beta-ring hydroxylations of beta-carotene. Produces beta-cryptoxanthin and zeaxanthin. Uses ferredoxin as an electron donor. In Capsicum annuum (Capsicum pepper), this protein is Beta-carotene hydroxylase 2, chloroplastic.